The following is a 259-amino-acid chain: uncharacterized protein (259 aa).

The or 26 signal peptide spans 1–19 (MKLSVKIAGVLTVAAAAMT). 214 to 221 (GPYELGKT) is an ATP binding site.

This is an uncharacterized protein from Bacillus subtilis (strain 168).